Reading from the N-terminus, the 225-residue chain is MNWVIIAALFFVIINKLLQYTSRYQEAWINKFSISSDISSLSKEYSKLSAERLKIKEENQSISAQDNYARWTKNNRKLTKLEGELEKLRSNLKIAKDSQSKLFNRLKLLTLTLPFMILKLWKGKFIVYDIPTKDTFPVIVNGVLSQGLLYIPLLPINFLRGIDPNKHILVPGVSLGIWLMALTKTIDTVEFIVKQLVFQPVVSKQVKEKTKEKVVELKTTEAELD.

A topological domain (lumenal) is located at residue Met1. Residues 2-21 (NWVIIAALFFVIINKLLQYT) form a helical membrane-spanning segment. The Cytoplasmic segment spans residues 22-107 (SRYQEAWINK…SQSKLFNRLK (86 aa)). Residues 37–104 (DISSLSKEYS…AKDSQSKLFN (68 aa)) adopt a coiled-coil conformation. Residues 108 to 128 (LLTLTLPFMILKLWKGKFIVY) form a helical membrane-spanning segment. At 129–172 (DIPTKDTFPVIVNGVLSQGLLYIPLLPINFLRGIDPNKHILVPG) the chain is on the lumenal side. A helical transmembrane segment spans residues 173–189 (VSLGIWLMALTKTIDTV). The Cytoplasmic segment spans residues 190 to 225 (EFIVKQLVFQPVVSKQVKEKTKEKVVELKTTEAELD).

The protein belongs to the WRB/GET1 family. In terms of assembly, component of the Golgi to ER traffic (GET) complex, which is composed of GET1, GET2 and GET3. Within the complex, GET1 and GET2 form a heterotetramer which is stabilized by phosphatidylinositol binding and which binds to the GET3 homodimer.

It is found in the endoplasmic reticulum membrane. The protein resides in the golgi apparatus membrane. Functionally, required for the post-translational delivery of tail-anchored (TA) proteins to the endoplasmic reticulum. Together with GET2, acts as a membrane receptor for soluble GET3, which recognizes and selectively binds the transmembrane domain of TA proteins in the cytosol. The GET complex cooperates with the HDEL receptor ERD2 to mediate the ATP-dependent retrieval of resident ER proteins that contain a C-terminal H-D-E-L retention signal from the Golgi to the ER. The chain is Golgi to ER traffic protein 1 from Vanderwaltozyma polyspora (strain ATCC 22028 / DSM 70294 / BCRC 21397 / CBS 2163 / NBRC 10782 / NRRL Y-8283 / UCD 57-17) (Kluyveromyces polysporus).